Here is a 64-residue protein sequence, read N- to C-terminus: uncharacterized protein (64 aa).

The interval 35–64 (TIRKPPIEHAAGPLGSTSRAGHRSYGGVAS) is disordered.

This is an uncharacterized protein from Mycobacterium tuberculosis (strain ATCC 25618 / H37Rv).